A 188-amino-acid polypeptide reads, in one-letter code: Peptidyl-tRNA hydrolase (188 aa).

Residue Tyr-16 coordinates tRNA. His-21 serves as the catalytic Proton acceptor. 3 residues coordinate tRNA: Phe-66, Asn-68, and Asn-114.

Belongs to the PTH family. Monomer.

The protein resides in the cytoplasm. The catalysed reaction is an N-acyl-L-alpha-aminoacyl-tRNA + H2O = an N-acyl-L-amino acid + a tRNA + H(+). In terms of biological role, hydrolyzes ribosome-free peptidyl-tRNAs (with 1 or more amino acids incorporated), which drop off the ribosome during protein synthesis, or as a result of ribosome stalling. Functionally, catalyzes the release of premature peptidyl moieties from peptidyl-tRNA molecules trapped in stalled 50S ribosomal subunits, and thus maintains levels of free tRNAs and 50S ribosomes. In Citrifermentans bemidjiense (strain ATCC BAA-1014 / DSM 16622 / JCM 12645 / Bem) (Geobacter bemidjiensis), this protein is Peptidyl-tRNA hydrolase.